Reading from the N-terminus, the 152-residue chain is UPF0178 protein YaiI (152 aa).

The protein belongs to the UPF0178 family.

This is UPF0178 protein YaiI from Escherichia coli O17:K52:H18 (strain UMN026 / ExPEC).